Reading from the N-terminus, the 566-residue chain is Acyl-CoA synthetase ALT10 (566 aa).

196-207 (MLFTSGTTGAPK) lines the AMP pocket. Residues 473–551 (EVEHAALSHE…DAVHYNRTGK (79 aa)) are AMP-binding.

The protein belongs to the ATP-dependent AMP-binding enzyme family.

The protein operates within mycotoxin biosynthesis. Functionally, acyl-CoA synthetase; part of the gene cluster that mediates the biosynthesis of the host-selective toxins (HSTs) AAL-toxins, sphinganine-analog mycotoxins responsible for Alternaria stem canker on tomato by the tomato pathotype. The biosynthesis starts with the polyketide synthase ALT1-catalyzed C-16 carbon chain assembly from one starter acetyl-CoA unit with malonyl-CoA extender units. ALT1 also selectively transfers methyl groups at the first and the third cycle of chain elongation for AAL toxin. The C-16 polyketide chain is released from the enzyme by a nucleophilic attack of a carbanion, which is derived from R-carbon of glycin by decarboxylation, on the carbonyl carbon of polyketide acyl chain. This step is probably catalyzed by a pyridoxal 5'-phosphate-dependent aminoacyl transferase ALT4. The respective functions of the other enzymes encoded by the cluster have still to be elucidated. The sphingosine N-acyltransferase-like protein ALT7 seems not to act as a resistance/self-tolerance factor against the toxin in the toxin biosynthetic gene cluster, contrary to what is expected. This chain is Acyl-CoA synthetase ALT10, found in Alternaria alternata (Alternaria rot fungus).